The primary structure comprises 105 residues: Large ribosomal subunit protein bL21 (105 aa).

Belongs to the bacterial ribosomal protein bL21 family. In terms of assembly, part of the 50S ribosomal subunit. Contacts protein L20.

This protein binds to 23S rRNA in the presence of protein L20. This chain is Large ribosomal subunit protein bL21, found in Parabacteroides distasonis (strain ATCC 8503 / DSM 20701 / CIP 104284 / JCM 5825 / NCTC 11152).